Consider the following 200-residue polypeptide: LHFPL tetraspan subfamily member 6 protein (200 aa).

An N-terminal signal peptide occupies residues 1–21 (MASSLTCTGVIWALLSFLCAA). Transmembrane regions (helical) follow at residues 84-104 (ICTI…LTAL), 123-143 (GIQF…PLGW), and 166-186 (IGWA…LCTW).

This sequence belongs to the LHFP family. Pancreas, kidney, skeletal muscle, liver, lung brain, heart, colon, small intestine, uterus, testis, prostate, thymus, spleen and placenta.

Its subcellular location is the membrane. The sequence is that of LHFPL tetraspan subfamily member 6 protein from Homo sapiens (Human).